Consider the following 225-residue polypeptide: Ribosome maturation factor RimM (225 aa).

Residues alanine 144 to tyrosine 225 form the PRC barrel domain.

Belongs to the RimM family. In terms of assembly, binds ribosomal protein uS19.

It localises to the cytoplasm. Functionally, an accessory protein needed during the final step in the assembly of 30S ribosomal subunit, possibly for assembly of the head region. Essential for efficient processing of 16S rRNA. May be needed both before and after RbfA during the maturation of 16S rRNA. It has affinity for free ribosomal 30S subunits but not for 70S ribosomes. This chain is Ribosome maturation factor RimM, found in Burkholderia orbicola (strain MC0-3).